The chain runs to 340 residues: 4-hydroxy-3-methylbut-2-enyl diphosphate reductase (340 aa).

Cysteine 19 serves as a coordination point for [4Fe-4S] cluster. The (2E)-4-hydroxy-3-methylbut-2-enyl diphosphate site is built by histidine 50 and histidine 90. Dimethylallyl diphosphate-binding residues include histidine 50 and histidine 90. The isopentenyl diphosphate site is built by histidine 50 and histidine 90. Cysteine 112 is a binding site for [4Fe-4S] cluster. Histidine 141 contributes to the (2E)-4-hydroxy-3-methylbut-2-enyl diphosphate binding site. Histidine 141 is a dimethylallyl diphosphate binding site. Histidine 141 contributes to the isopentenyl diphosphate binding site. Glutamate 143 serves as the catalytic Proton donor. Threonine 190 lines the (2E)-4-hydroxy-3-methylbut-2-enyl diphosphate pocket. Cysteine 220 is a [4Fe-4S] cluster binding site. Positions 248, 249, 250, and 292 each coordinate (2E)-4-hydroxy-3-methylbut-2-enyl diphosphate. Dimethylallyl diphosphate is bound by residues serine 248, serine 249, asparagine 250, and serine 292. Isopentenyl diphosphate is bound by residues serine 248, serine 249, asparagine 250, and serine 292.

This sequence belongs to the IspH family. [4Fe-4S] cluster serves as cofactor.

It catalyses the reaction isopentenyl diphosphate + 2 oxidized [2Fe-2S]-[ferredoxin] + H2O = (2E)-4-hydroxy-3-methylbut-2-enyl diphosphate + 2 reduced [2Fe-2S]-[ferredoxin] + 2 H(+). It carries out the reaction dimethylallyl diphosphate + 2 oxidized [2Fe-2S]-[ferredoxin] + H2O = (2E)-4-hydroxy-3-methylbut-2-enyl diphosphate + 2 reduced [2Fe-2S]-[ferredoxin] + 2 H(+). It functions in the pathway isoprenoid biosynthesis; dimethylallyl diphosphate biosynthesis; dimethylallyl diphosphate from (2E)-4-hydroxy-3-methylbutenyl diphosphate: step 1/1. It participates in isoprenoid biosynthesis; isopentenyl diphosphate biosynthesis via DXP pathway; isopentenyl diphosphate from 1-deoxy-D-xylulose 5-phosphate: step 6/6. Its function is as follows. Catalyzes the conversion of 1-hydroxy-2-methyl-2-(E)-butenyl 4-diphosphate (HMBPP) into a mixture of isopentenyl diphosphate (IPP) and dimethylallyl diphosphate (DMAPP). Acts in the terminal step of the DOXP/MEP pathway for isoprenoid precursor biosynthesis. This chain is 4-hydroxy-3-methylbut-2-enyl diphosphate reductase, found in Thermus thermophilus (strain ATCC BAA-163 / DSM 7039 / HB27).